The chain runs to 101 residues: Small ribosomal subunit protein uS10 (101 aa).

This sequence belongs to the universal ribosomal protein uS10 family. As to quaternary structure, part of the 30S ribosomal subunit.

Involved in the binding of tRNA to the ribosomes. In Corynebacterium aurimucosum (strain ATCC 700975 / DSM 44827 / CIP 107346 / CN-1) (Corynebacterium nigricans), this protein is Small ribosomal subunit protein uS10.